We begin with the raw amino-acid sequence, 346 residues long: Phosphoribosylformylglycinamidine cyclo-ligase (346 aa).

It belongs to the AIR synthase family.

The protein localises to the cytoplasm. The enzyme catalyses 2-formamido-N(1)-(5-O-phospho-beta-D-ribosyl)acetamidine + ATP = 5-amino-1-(5-phospho-beta-D-ribosyl)imidazole + ADP + phosphate + H(+). It functions in the pathway purine metabolism; IMP biosynthesis via de novo pathway; 5-amino-1-(5-phospho-D-ribosyl)imidazole from N(2)-formyl-N(1)-(5-phospho-D-ribosyl)glycinamide: step 2/2. The sequence is that of Phosphoribosylformylglycinamidine cyclo-ligase from Methylobacillus flagellatus (strain ATCC 51484 / DSM 6875 / VKM B-1610 / KT).